The following is a 552-amino-acid chain: MAGUK p55 subfamily member 2 (552 aa).

L27 domains lie at 8 to 59 (SESA…EETK) and 60 to 118 (LEAV…YETP). Ser-42 bears the Phosphoserine mark. At Thr-117 the chain carries Phosphothreonine. A Phosphoserine modification is found at Ser-121. The PDZ domain occupies 140 to 219 (MVGIRKTAGE…SVILKILPSY (80 aa)). An SH3 domain is found at 225–293 (PRQVFVKCHF…PSQLLEEKRK (69 aa)). One can recognise a Guanylate kinase-like domain in the interval 350–537 (RKTLVLIGAQ…TFRELQTAME (188 aa)).

This sequence belongs to the MAGUK family. As to quaternary structure, can homomultimerise. Interacts with CACNG2. Interacts (via the SH3-Guanylate kinase-like sub-module) with DLG4/PSD95 and DLGAP1/GKAP. Interacts (via the PDZ domain) with CADM1 (via C-terminus). Interacts with KCNN2/SK2 (via N-terminal domain). Interacts with SRC. Phosphorylated by SRC. In terms of tissue distribution, expressed in pyramidal neurons of CA1 region of the hippocampus.

The protein localises to the cell projection. It is found in the dendrite. Its subcellular location is the postsynaptic density. It localises to the cytoplasm. The protein resides in the cytoskeleton. The protein localises to the membrane. In terms of biological role, postsynaptic MAGUK scaffold protein that links CADM1 cell adhesion molecules to core components of the postsynaptic density. In CA1 pyramidal neurons, required for synaptic KCNN2-containing channel function and long-term potentiation expression. Seems to negatively regulate SRC function in epithelial cells. This chain is MAGUK p55 subfamily member 2, found in Mus musculus (Mouse).